Reading from the N-terminus, the 490-residue chain is GTPase Der (490 aa).

EngA-type G domains follow at residues 3–166 and 203–376; these read PVVA…MEDL and IKLA…DSST. Residues 9–16, 56–60, 118–121, 209–216, 256–260, and 321–324 contribute to the GTP site; these read GRPNVGKS, DTGGI, NKTD, DTAGV, and NKWD. Positions 377–461 constitute a KH-like domain; sequence RRVGTSMLTR…PIRIQFKEGE (85 aa).

Belongs to the TRAFAC class TrmE-Era-EngA-EngB-Septin-like GTPase superfamily. EngA (Der) GTPase family. Associates with the 50S ribosomal subunit.

Functionally, GTPase that plays an essential role in the late steps of ribosome biogenesis. The protein is GTPase Der of Escherichia coli O7:K1 (strain IAI39 / ExPEC).